A 769-amino-acid chain; its full sequence is Serine protease HtrA-like (769 aa).

Residues 1 to 20 are compositionally biased toward basic residues; the sequence is MDIGKKHVIPKSQYRRKRRE. The interval 1–390 is disordered; sequence MDIGKKHVIP…ATSKLNKGRA (390 aa). 2 stretches are compositionally biased toward basic and acidic residues: residues 21-64 and 71-108; these read FFHN…ERFK and LEQRNRDVNENKAEESKSNQDSKSAYNRDHYLTDDVSK. Over residues 126 to 137 the composition is skewed to polar residues; sequence YEQNSEATLSTK. Positions 138 to 186 are enriched in basic and acidic residues; the sequence is STDKVESTEMRKLSSDKNKVGHEEQHVLSKPSEHDKETRIDSESSRTDS. Residues 247 to 262 show a composition bias toward polar residues; sequence QQSQNEQTKTYTYGDS. Basic and acidic residues-rich tracts occupy residues 264 to 296 and 310 to 330; these read QNDKSNHENDLSHHIPSISDDKDNVMRENHIVD and KTDDDRKLDEKIHVEDKHKQN. The segment covering 331–347 has biased composition (polar residues); that stretch reads ADSSETVGYQSQSTASH. The span at 348 to 364 shows a compositional bias: basic and acidic residues; the sequence is RSTEKRNISINDHDKLN. Polar residues predominate over residues 365 to 390; sequence GQKTNTKTSANNNQKKATSKLNKGRA. A helical transmembrane segment spans residues 410 to 430; that stretch reads LVILMGIIILIVILNAIFNNV. Catalysis depends on charge relay system residues His-504, Asp-534, and Ser-619. The 54-residue stretch at 680 to 733 folds into the PDZ domain; sequence IASLNSFERQAVKLPGKVKNGVVVDQVDNNGLADQSGLKKGDVITELDGKLLED.

This sequence belongs to the peptidase S1C family.

Its subcellular location is the cell membrane. The protein is Serine protease HtrA-like of Staphylococcus aureus (strain USA300).